The primary structure comprises 276 residues: NADPH-dependent 7-cyano-7-deazaguanine reductase (276 aa).

Position 83-85 (83-85 (IES)) interacts with substrate. 85–86 (SK) serves as a coordination point for NADPH. Cysteine 184 functions as the Thioimide intermediate in the catalytic mechanism. Residue aspartate 191 is the Proton donor of the active site. Substrate is bound at residue 223–224 (HE). 252–253 (RG) provides a ligand contact to NADPH.

It belongs to the GTP cyclohydrolase I family. QueF type 2 subfamily. As to quaternary structure, homodimer.

Its subcellular location is the cytoplasm. The catalysed reaction is 7-aminomethyl-7-carbaguanine + 2 NADP(+) = 7-cyano-7-deazaguanine + 2 NADPH + 3 H(+). Its pathway is tRNA modification; tRNA-queuosine biosynthesis. Catalyzes the NADPH-dependent reduction of 7-cyano-7-deazaguanine (preQ0) to 7-aminomethyl-7-deazaguanine (preQ1). In Pseudomonas fluorescens (strain Pf0-1), this protein is NADPH-dependent 7-cyano-7-deazaguanine reductase.